The following is a 292-amino-acid chain: 33 kDa chaperonin (292 aa).

2 cysteine pairs are disulfide-bonded: Cys-230-Cys-232 and Cys-263-Cys-266.

This sequence belongs to the HSP33 family. Post-translationally, under oxidizing conditions two disulfide bonds are formed involving the reactive cysteines. Under reducing conditions zinc is bound to the reactive cysteines and the protein is inactive.

The protein resides in the cytoplasm. In terms of biological role, redox regulated molecular chaperone. Protects both thermally unfolding and oxidatively damaged proteins from irreversible aggregation. Plays an important role in the bacterial defense system toward oxidative stress. The sequence is that of 33 kDa chaperonin from Salmonella choleraesuis (strain SC-B67).